A 212-amino-acid polypeptide reads, in one-letter code: Peptide methionine sulfoxide reductase MsrA (212 aa).

Cys52 is a catalytic residue.

This sequence belongs to the MsrA Met sulfoxide reductase family.

It carries out the reaction L-methionyl-[protein] + [thioredoxin]-disulfide + H2O = L-methionyl-(S)-S-oxide-[protein] + [thioredoxin]-dithiol. The enzyme catalyses [thioredoxin]-disulfide + L-methionine + H2O = L-methionine (S)-S-oxide + [thioredoxin]-dithiol. Its function is as follows. Has an important function as a repair enzyme for proteins that have been inactivated by oxidation. Catalyzes the reversible oxidation-reduction of methionine sulfoxide in proteins to methionine. This chain is Peptide methionine sulfoxide reductase MsrA, found in Escherichia coli (strain ATCC 8739 / DSM 1576 / NBRC 3972 / NCIMB 8545 / WDCM 00012 / Crooks).